Here is a 428-residue protein sequence, read N- to C-terminus: Dihydroorotase (428 aa).

Residues His-59 and His-61 each contribute to the Zn(2+) site. Residues 61-63 (HLR) and Asn-93 contribute to the substrate site. Zn(2+)-binding residues include Asp-151, His-178, and His-231. Substrate is bound at residue Asn-277. Asp-304 provides a ligand contact to Zn(2+). Residue Asp-304 is part of the active site. Residues His-308 and 322–323 (FG) contribute to the substrate site.

This sequence belongs to the metallo-dependent hydrolases superfamily. DHOase family. Class I DHOase subfamily. Requires Zn(2+) as cofactor.

The catalysed reaction is (S)-dihydroorotate + H2O = N-carbamoyl-L-aspartate + H(+). Its pathway is pyrimidine metabolism; UMP biosynthesis via de novo pathway; (S)-dihydroorotate from bicarbonate: step 3/3. Functionally, catalyzes the reversible cyclization of carbamoyl aspartate to dihydroorotate. The polypeptide is Dihydroorotase (Bacillus cereus (strain G9842)).